A 77-amino-acid chain; its full sequence is Putative defensin-like protein 158 (77 aa).

The first 24 residues, M1 to G24, serve as a signal peptide directing secretion. Intrachain disulfides connect C31–C77, C41–C60, C46–C71, and C50–C73.

It belongs to the DEFL family.

The protein resides in the secreted. This chain is Putative defensin-like protein 158 (LCR23), found in Arabidopsis thaliana (Mouse-ear cress).